The primary structure comprises 93 residues: Alpha-defensin 5 (93 aa).

Residues 1 to 19 form the signal peptide; that stretch reads MKTFVLLSALVLLAFQVQA. Positions 20 to 58 are excised as a propeptide; that stretch reads DPIHKTDEETNTEEQPGEEDQAVSISFGGQEGSALHEEL. Cystine bridges form between cysteine 64-cysteine 92, cysteine 66-cysteine 81, and cysteine 71-cysteine 91.

The protein belongs to the alpha-defensin family.

The protein localises to the secreted. In terms of biological role, probably contributes to the antimicrobial barrier function of the small bowel mucosa. In Mus musculus (Mouse), this protein is Alpha-defensin 5 (Defa5).